Consider the following 445-residue polypeptide: UPF0210 protein STER_0157 (445 aa).

Belongs to the UPF0210 family. Homodimer.

The chain is UPF0210 protein STER_0157 from Streptococcus thermophilus (strain ATCC BAA-491 / LMD-9).